Reading from the N-terminus, the 397-residue chain is ATP phosphoribosyltransferase regulatory subunit (397 aa).

This sequence belongs to the class-II aminoacyl-tRNA synthetase family. HisZ subfamily. In terms of assembly, heteromultimer composed of HisG and HisZ subunits.

The protein resides in the cytoplasm. It participates in amino-acid biosynthesis; L-histidine biosynthesis; L-histidine from 5-phospho-alpha-D-ribose 1-diphosphate: step 1/9. Functionally, required for the first step of histidine biosynthesis. May allow the feedback regulation of ATP phosphoribosyltransferase activity by histidine. This Nitrosococcus oceani (strain ATCC 19707 / BCRC 17464 / JCM 30415 / NCIMB 11848 / C-107) protein is ATP phosphoribosyltransferase regulatory subunit.